A 265-amino-acid polypeptide reads, in one-letter code: Apolipoprotein A-I (265 aa).

A signal peptide spans 1 to 18 (MKAVLLTLAVLFLTGSQA). Repeat copies occupy residues 67-88 (LKLL…EQLG) and 89-110 (PVTQ…QEMN). A 10 X approximate tandem repeats region spans residues 67-265 (LKLLDNWDSL…DEASKKLNAQ (199 aa)). The residue at position 109 (Met-109) is a Methionine sulfoxide. The stretch at 111–121 (KDLEEVKQKVQ) is one 3; half-length repeat. Tandem repeats lie at residues 122-142 (PYLD…RQKV), 144-165 (PLGE…DKLT), 166-187 (PLAE…QQLA), 188-209 (PYSD…AGGG), and 210-230 (SLAE…EKAK). Residues 231–241 (PALEDLRQGLV) form a 9; half-length repeat. Residues 242–265 (PVLESLKVSILAAIDEASKKLNAQ) form repeat 10.

It belongs to the apolipoprotein A1/A4/E family. In terms of assembly, homodimer. Interacts with APOA1BP and CLU. Component of a sperm activating protein complex (SPAP), consisting of APOA1, an immunoglobulin heavy chain, an immunoglobulin light chain and albumin. Interacts with NDRG1. Interacts with SCGB3A2. Interacts with NAXE and YJEFN3. In terms of processing, glycosylated. Palmitoylated. Post-translationally, phosphorylation sites are present in the extracellular medium. Major protein of plasma HDL, also found in chylomicrons.

The protein localises to the secreted. Functionally, participates in the reverse transport of cholesterol from tissues to the liver for excretion by promoting cholesterol efflux from tissues and by acting as a cofactor for the lecithin cholesterol acyltransferase (LCAT). As part of the SPAP complex, activates spermatozoa motility. This chain is Apolipoprotein A-I (APOA1), found in Tursiops truncatus (Atlantic bottle-nosed dolphin).